Here is a 198-residue protein sequence, read N- to C-terminus: Bcl-2-like protein 11 (198 aa).

Positions 1–72 are disordered; the sequence is MAKQPSDVSS…PLAPPASPGP (72 aa). A Phosphoserine; by MAPK modification is found at S69. Phosphoserine occurs at positions 77, 87, and 94. Positions 148–162 match the BH3 motif; the sequence is IAQELRRIGDEFNAY.

This sequence belongs to the Bcl-2 family. As to quaternary structure, forms heterodimers with a number of antiapoptotic Bcl-2 proteins, including MCL1, BCL2, BCL2L1 isoform Bcl-X(L), BCL2A1/BFL-1, BHRF1, and BCL2L2/BCLW. Does not heterodimerize with proapoptotic proteins such as BAD, BOK or BAK. Identified in a complex containing BCL2L11, DYNLL1 and BCL2L1 isoform Bcl-X(L); BH3 integrity is required for BCL2L1-binding. Interacts with YWHAZ. When phosphorylated, interacts with TRIM2; this interaction is associated with ubiquitination and degradation. Interacts with MCL1; may sequester BCL2L11 to prevent its pro-apoptotic activity. Interacts with GIMAP5. Interacts with BCL2L10/BCL-B. In terms of assembly, interacts (when phosphorylated) with USP27X; the interaction leads to BCL2L11 deubiquitination and stabilization. Interacts with humanin; the interaction prevents BIM-induced apoptosis. Does not interact with humanin. As to quaternary structure, interacts with BAX; the interaction may lead to BAX activation through conformational change. Does not interact with humanin. In terms of assembly, interacts with BAX; the interaction may lead to BAX activation through conformational change. Post-translationally, phosphorylation at Ser-69 by MAPK1/MAPK3 leads to interaction with TRIM2 and polyubiquitination, followed by proteasomal degradation. Deubiquitination catalyzed by USP27X stabilizes the protein. Ubiquitination by TRIM2 following phosphorylation by MAPK1/MAPK3 leads to proteasomal degradation. Conversely, deubiquitination catalyzed by USP27X stabilizes the protein. As to expression, isoform BimEL, isoform BimL and isoform BimS are the predominant isoforms and are widely expressed with tissue-specific variation. Isoform Bim-gamma is most abundantly expressed in small intestine and colon, and in lower levels in spleen, prostate, testis, heart, liver and kidney.

Its subcellular location is the endomembrane system. It is found in the mitochondrion. Its function is as follows. Induces apoptosis and anoikis. Isoform BimL is more potent than isoform BimEL. Isoform Bim-alpha1, isoform Bim-alpha2 and isoform Bim-alpha3 induce apoptosis, although less potent than isoform BimEL, isoform BimL and isoform BimS. Isoform Bim-gamma induces apoptosis. Isoform Bim-alpha3 induces apoptosis possibly through a caspase-mediated pathway. Isoform BimAC and isoform BimABC lack the ability to induce apoptosis. The polypeptide is Bcl-2-like protein 11 (BCL2L11) (Homo sapiens (Human)).